A 104-amino-acid polypeptide reads, in one-letter code: UPF0235 protein M446_3939 (104 aa).

Belongs to the UPF0235 family.

The sequence is that of UPF0235 protein M446_3939 from Methylobacterium sp. (strain 4-46).